The following is a 259-amino-acid chain: Major cell-binding factor (259 aa).

Positions 1–26 (MVFRKSLLKLAVFALGACVAFSNANA) are cleaved as a signal peptide.

It belongs to the bacterial solute-binding protein 3 family.

It is found in the cell surface. Functionally, common antigen and a major cell adherence molecule. Most probably involved, with PEB1C, in a binding-protein-dependent transport system for an amino acid. May be involved in binding to intestinal cells. In Campylobacter jejuni subsp. jejuni serotype O:2 (strain ATCC 700819 / NCTC 11168), this protein is Major cell-binding factor (peb1A).